A 396-amino-acid polypeptide reads, in one-letter code: 1-deoxy-D-xylulose 5-phosphate reductoisomerase (396 aa).

NADPH contacts are provided by T13, G14, S15, I16, and N127. K128 serves as a coordination point for 1-deoxy-D-xylulose 5-phosphate. E129 contacts NADPH. Mn(2+) is bound at residue D153. 4 residues coordinate 1-deoxy-D-xylulose 5-phosphate: S154, E155, S184, and H207. E155 contributes to the Mn(2+) binding site. G213 is an NADPH binding site. Residues S220, N225, K226, and E229 each coordinate 1-deoxy-D-xylulose 5-phosphate. E229 contacts Mn(2+).

The protein belongs to the DXR family. Mg(2+) is required as a cofactor. Requires Mn(2+) as cofactor.

The catalysed reaction is 2-C-methyl-D-erythritol 4-phosphate + NADP(+) = 1-deoxy-D-xylulose 5-phosphate + NADPH + H(+). Its pathway is isoprenoid biosynthesis; isopentenyl diphosphate biosynthesis via DXP pathway; isopentenyl diphosphate from 1-deoxy-D-xylulose 5-phosphate: step 1/6. Catalyzes the NADPH-dependent rearrangement and reduction of 1-deoxy-D-xylulose-5-phosphate (DXP) to 2-C-methyl-D-erythritol 4-phosphate (MEP). The polypeptide is 1-deoxy-D-xylulose 5-phosphate reductoisomerase (Pseudomonas paraeruginosa (strain DSM 24068 / PA7) (Pseudomonas aeruginosa (strain PA7))).